We begin with the raw amino-acid sequence, 32 residues long: Natriuretic peptide Coa_NP2 (32 aa).

A disulfide bridge connects residues Cys-8 and Cys-24.

The protein belongs to the natriuretic peptide family. Snake NP subfamily. In terms of tissue distribution, expressed by the venom gland.

It is found in the secreted. Snake venom natriuretic peptide that exhibits hypotensive and vasorelaxant effects. Produces a dose-dependent hypotension in rats, followed by significant increases in concentrations of markers of nitric oxide (NO) formation measured in the plasma and vasorelaxation in a thoracic aortic ring bath. The peptide may exert its hypotensive action, at least in part, through stimulation of NO production. The vasorelaxant effect is endothelium-dependent and does not appear to be mediated by the natriuretic peptide receptor-A, as its action is not modified by isatin (a potent NPR1 antagonist). May act by activating the natriuretic peptide receptor-B (NPR2). This Crotalus lutosus abyssus (Grand Canyon rattlesnake) protein is Natriuretic peptide Coa_NP2.